Consider the following 427-residue polypeptide: UPF0229 protein YeaH (427 aa).

Residues 79-90 (NDHFVQNDRIER) are compositionally biased toward basic and acidic residues. The tract at residues 79-110 (NDHFVQNDRIERPQGGGGGSGSGQGQASQDGE) is disordered. The span at 92-102 (QGGGGGSGSGQ) shows a compositional bias: gly residues.

The protein belongs to the UPF0229 family.

This chain is UPF0229 protein YeaH, found in Shigella boydii serotype 18 (strain CDC 3083-94 / BS512).